Here is a 1125-residue protein sequence, read N- to C-terminus: ATP-dependent DNA helicase Hel308 (1125 aa).

The Q motif motif lies at 1 to 29 (MKVDELPIDERIKRVIKERGIEELYPPQA). ATP contacts are provided by residues Q28 and 46–53 (IPTASGKT). One can recognise a Helicase ATP-binding domain in the interval 33–197 (KSGVLEGKNL…WLDASLVVSD (165 aa)). Residues 145–148 (DEVH) carry the DEAH box motif. Residues 226-440 (NWESLVLDAV…ELKERLESET (215 aa)) enclose the Helicase C-terminal domain. In terms of domain architecture, DOD-type homing endonuclease spans 500–640 (LIGLWIAEGS…LQLLVASLGY (141 aa)).

Belongs to the helicase family. Hel308 subfamily. Monomer. In terms of processing, this protein undergoes a protein self splicing that involves a post-translational excision of the intervening region (intein) followed by peptide ligation.

It carries out the reaction Couples ATP hydrolysis with the unwinding of duplex DNA by translocating in the 3'-5' direction.. It catalyses the reaction ATP + H2O = ADP + phosphate + H(+). Functionally, DNA-dependent ATPase and 3'-5' DNA helicase that may be involved in repair of stalled replication forks. The protein is ATP-dependent DNA helicase Hel308 of Thermococcus kodakarensis (strain ATCC BAA-918 / JCM 12380 / KOD1) (Pyrococcus kodakaraensis (strain KOD1)).